Reading from the N-terminus, the 121-residue chain is Large ribosomal subunit protein uL18 (121 aa).

This sequence belongs to the universal ribosomal protein uL18 family. Part of the 50S ribosomal subunit; part of the 5S rRNA/L5/L18/L25 subcomplex. Contacts the 5S and 23S rRNAs.

In terms of biological role, this is one of the proteins that bind and probably mediate the attachment of the 5S RNA into the large ribosomal subunit, where it forms part of the central protuberance. The polypeptide is Large ribosomal subunit protein uL18 (Mesomycoplasma hyopneumoniae (strain J / ATCC 25934 / NCTC 10110) (Mycoplasma hyopneumoniae)).